Here is a 118-residue protein sequence, read N- to C-terminus: Small ribosomal subunit protein uS13 (118 aa).

A disordered region spans residues 94-118 (SLPLRGQRTKTNARTRKGPRKPIRK).

It belongs to the universal ribosomal protein uS13 family. Part of the 30S ribosomal subunit. Forms a loose heterodimer with protein S19. Forms two bridges to the 50S subunit in the 70S ribosome.

Its function is as follows. Located at the top of the head of the 30S subunit, it contacts several helices of the 16S rRNA. In the 70S ribosome it contacts the 23S rRNA (bridge B1a) and protein L5 of the 50S subunit (bridge B1b), connecting the 2 subunits; these bridges are implicated in subunit movement. Contacts the tRNAs in the A and P-sites. This is Small ribosomal subunit protein uS13 from Shewanella woodyi (strain ATCC 51908 / MS32).